The primary structure comprises 447 residues: Probable glycine dehydrogenase (decarboxylating) subunit 1 (447 aa).

Belongs to the GcvP family. N-terminal subunit subfamily. The glycine cleavage system is composed of four proteins: P, T, L and H. In this organism, the P 'protein' is a heterodimer of two subunits.

It catalyses the reaction N(6)-[(R)-lipoyl]-L-lysyl-[glycine-cleavage complex H protein] + glycine + H(+) = N(6)-[(R)-S(8)-aminomethyldihydrolipoyl]-L-lysyl-[glycine-cleavage complex H protein] + CO2. Functionally, the glycine cleavage system catalyzes the degradation of glycine. The P protein binds the alpha-amino group of glycine through its pyridoxal phosphate cofactor; CO(2) is released and the remaining methylamine moiety is then transferred to the lipoamide cofactor of the H protein. This Bacillus cereus (strain G9842) protein is Probable glycine dehydrogenase (decarboxylating) subunit 1.